Consider the following 329-residue polypeptide: MDGPVAEHAKQEPFHVVTPLLESWALSQVAGMPVFLKCENVQPSGSFKIRGIGHFCQEMAKKGCRHLVCSSGGNAGIAAAYAARKLGIPATIVLPESTSLQVVQRLQGEGAEVQLTGKVWDEANLRAQELAKRDGWENVPPFDHPLIWKGHASLVQELKAVLRTPPGALVLAVGGGGLLAGVVAGLLEVGWQHVPIIAMETHGAHCFNAAITAGKLVTLPDITSVAKSLGAKTVAARALECMQVCKIHSEVVEDTEAVSAVQQLLDDERMLVEPACGAALAAIYSGLLRRLQAEGCLPPSLTSVVVIVCGGNNINSRELQALKTHLGQV.

Position 1 is an N-acetylmethionine (M1). Position 48 is an N6-(pyridoxal phosphate)lysine (K48).

The protein belongs to the serine/threonine dehydratase family. Monomer. Homodimer. Requires pyridoxal 5'-phosphate as cofactor. In terms of tissue distribution, expressed in lung cancer cell lines.

The enzyme catalyses L-serine = pyruvate + NH4(+). It carries out the reaction L-threonine = 2-oxobutanoate + NH4(+). It catalyses the reaction L-glutamate = D-glutamate. Functionally, catalyzes the pyridoxal-phosphate-dependent dehydrative deamination of L-threonine and L-serine to ammonia and alpha-ketobutyrate and pyruvate, respectively. Also exhibits racemase activity towards L-glutamate and D-glutamate. The chain is Serine dehydratase-like (SDSL) from Homo sapiens (Human).